Reading from the N-terminus, the 122-residue chain is MIQPQTHLNVADNSGARELMCIRILGASNRRYAYIGDIVVAVIKQAVPNTNLERSEVIRAVIVRTCKELKRSNGIIIQYDDNAAVVIDQEGNPKGTRIFCAIARELRQLNFTKIVSLAPEVL.

It belongs to the universal ribosomal protein uL14 family. In terms of assembly, part of the 50S ribosomal subunit.

It is found in the plastid. The protein localises to the chloroplast. Functionally, binds to 23S rRNA. This Glycine max (Soybean) protein is Large ribosomal subunit protein uL14c.